The following is a 487-amino-acid chain: NADH-quinone oxidoreductase subunit N (487 aa).

14 helical membrane passes run 16 to 36 (VIMPEVILSVLGMALLLVNVF), 45 to 65 (LAWLSLIGIVGAGFAAVTGWG), 79 to 99 (NFAIFFKIIFLLAAGLAVLIS), 111 to 131 (GELYPIILFTTVGMMLMAAAT), 133 to 153 (LMTIFLGLELMSISLYVLAGF), 168 to 188 (FLLGAFSTGFLLYGMALIYGV), 212 to 232 (LLIGMFLMLTGFLFKIAAAPF), 257 to 276 (AAGFAAMLRLLLVAFPAMIA), 281 to 298 (LLWILAVLTMTVGNFTAL), 306 to 326 (MLAYSSIAHAGYCLVGFASGT), 333 to 353 (ILFYMLSYTFMNIGAFAVIVL), 378 to 398 (ALAMTVFMFSLAGMPPTAGFI), 413 to 435 (IWLAIIGVLNSAASVYYYLRVIV), and 457 to 477 (LALVVSAAGSLIPGIIPSMIL).

It belongs to the complex I subunit 2 family. NDH-1 is composed of 14 different subunits. Subunits NuoA, H, J, K, L, M, N constitute the membrane sector of the complex.

The protein localises to the cell inner membrane. The enzyme catalyses a quinone + NADH + 5 H(+)(in) = a quinol + NAD(+) + 4 H(+)(out). NDH-1 shuttles electrons from NADH, via FMN and iron-sulfur (Fe-S) centers, to quinones in the respiratory chain. The immediate electron acceptor for the enzyme in this species is believed to be ubiquinone. Couples the redox reaction to proton translocation (for every two electrons transferred, four hydrogen ions are translocated across the cytoplasmic membrane), and thus conserves the redox energy in a proton gradient. The polypeptide is NADH-quinone oxidoreductase subunit N (Trichlorobacter lovleyi (strain ATCC BAA-1151 / DSM 17278 / SZ) (Geobacter lovleyi)).